The following is a 294-amino-acid chain: MQDYLVRAVASDGNFRIFSARTTNTVEEARTRHNSWPVATAALGRTMTAALLMGANLKGEDTLSIRVLGDGPLGAIIVTSNAKGEVRGYVQEPQIHLPSTPEGKLAVGAAVGKGHLHITKDLGLKEPFTGSVELVSGEIAEDFAHYLTTSEQTPSAVSLGVLVDTDNSVVAAGGLILQLLPGAGEEVLEILEQNLRQLPHLSSLIKNGETPEDIIKRVTKGIEMKFLESNPVGFSCQCSRERLENLLVGIGKDEVTSMLQEQGAAEINCHFCAENYHFDKKDLQRILKRIEEKD.

Intrachain disulfides connect cysteine 236-cysteine 238 and cysteine 269-cysteine 272.

The protein belongs to the HSP33 family. Under oxidizing conditions two disulfide bonds are formed involving the reactive cysteines. Under reducing conditions zinc is bound to the reactive cysteines and the protein is inactive.

Its subcellular location is the cytoplasm. Functionally, redox regulated molecular chaperone. Protects both thermally unfolding and oxidatively damaged proteins from irreversible aggregation. Plays an important role in the bacterial defense system toward oxidative stress. The sequence is that of 33 kDa chaperonin from Desulforamulus reducens (strain ATCC BAA-1160 / DSM 100696 / MI-1) (Desulfotomaculum reducens).